The sequence spans 345 residues: Large ribosomal subunit protein uL4 (345 aa).

Residue A2 is modified to N-acetylalanine.

It belongs to the universal ribosomal protein uL4 family.

In Caenorhabditis elegans, this protein is Large ribosomal subunit protein uL4 (rpl-4).